A 1594-amino-acid polypeptide reads, in one-letter code: Calpain-D (1594 aa).

RanBP2-type zinc fingers lie at residues 1–35 (MGTISSVLQWSCTKCNTINPTESLKCFNCGTVRKV) and 135–164 (LNRRWVCHACGTDNSSVTWHCLICDTVSYL). Disordered regions lie at residues 210–256 (EEQH…TAID), 371–400 (EPQQKSPANPQQLQRKTQREPAAVSMNPTQ), 420–459 (ASSSSVSSSSNHHHHHHSNSNSNSSGNSNIINNNSSSSSG), 524–543 (KKKQQIASESQTNNNTGSGE), and 554–606 (AGLG…RLSG). Basic residues predominate over residues 215–229 (HQLHSQHLHKRHLKG). 2 stretches are compositionally biased toward polar residues: residues 246–255 (RRTQSLSTAI) and 371–385 (EPQQKSPANPQQLQR). Residue S250 is modified to Phosphoserine. A compositionally biased stretch (low complexity) spans 438-459 (NSNSNSSGNSNIINNNSSSSSG). Residues 528 to 541 (QIASESQTNNNTGS) are compositionally biased toward polar residues. The RanBP2-type 3 zinc finger occupies 643–673 (RSKMWICIKCSYAYNRLWLQTCEMCEAKAEQ). The interval 684–703 (QQQQQQHHHHHLQQQQAEAP) is disordered. RanBP2-type zinc fingers lie at residues 704–733 (RDEPWTCKKCTLVNYSTAMACVVCGGSKLK) and 744–774 (RKGEFWTCSHCTLKNSLHSPVCSACKSHRQP). Disordered regions lie at residues 786 to 811 (RPDGQSYEEQDAAAVGGGGGSAHQSG) and 860 to 884 (SLQQQRNSSSSGAIPKRHSTGGSIV). Polar residues predominate over residues 860 to 871 (SLQQQRNSSSSG). A RanBP2-type 6 zinc finger spans residues 927–956 (STKKWQCPACTYDNCAASVVCDICSSPRGL). In terms of domain architecture, Calpain catalytic spans 1014–1321 (LFVDDSFPPA…FDCIDICKVR (308 aa)). Residues C1079, H1245, and N1265 contribute to the active site.

This sequence belongs to the peptidase C2 family.

Its function is as follows. Has a role in eye development. In terms of biological role, calcium-regulated non-lysosomal thiol-protease. The polypeptide is Calpain-D (sol) (Drosophila melanogaster (Fruit fly)).